Reading from the N-terminus, the 316-residue chain is Short-chain dehydrogenase/reductase family 16C member 6 (316 aa).

Residue Leu40–Val64 participates in NAD(+) binding. Ser173 contacts substrate. The Proton acceptor role is filled by Tyr186.

This sequence belongs to the short-chain dehydrogenases/reductases (SDR) family.

This is Short-chain dehydrogenase/reductase family 16C member 6 (SDR16C6) from Bos taurus (Bovine).